A 596-amino-acid chain; its full sequence is MTMTLHTKASGMALLHQIQANELEPLNRPQLKIPLERPLGEVYMDSSKPAVYNYPEGAAYDFNAAAPASAPVYGQSGLPYGPGSEAAAFGANGLGAFPPLNSVSPSPLVLLHPPPQPLSPFLHPHGQQVPYYLENESSGYAVREAGPPAYYRPNSDNRRQGGRERLASTSDKGSMAMESAKETRYCAVCNDYASGYHYGVWSCEGCKAFFKRSIQGHNDYMCPATNQCTIDKNRRKSCQACRLRKCYEVGMMKGGIRKDRRGGRMLKHKRQRDDGEGRNEAVPSGDMRAANLWPSPIMIKHTKKNSPVLSLTADQMISALLEAEPPIIYSEYDPTRPFSEASMMGLLTNLADRELVHMINWAKRVPGFVDLALHDQVHLLECAWLEILMIGLVWRSMEHPGKLLFAPNLLLDRNQGKCVEGMVEIFDMLLATSSRFRMMNLQGEEFVCLKSIILLNSGVYTFLSSTLRSLEEKDHIHRVLDKITDTLIHLMAKAGLTLQQQHRRLAQLLLILSHFRHMSNKGMEHLYSMKCKNVVPLYDLLLEMLDAHRLHAPANFGSAPPEDVNQSQLAPTGCTSSHSLQTYYITGEAENFPSTV.

Positions 1-185 are modulating (transactivation AF-1); mediates interaction with MACROD1; the sequence is MTMTLHTKAS…AMESAKETRY (185 aa). An O-linked (GlcNAc) serine glycan is attached at Ser10. Residues 36–48 are required for interaction with NCOA1; that stretch reads ERPLGEVYMDSSK. An interaction with DDX5; self-association region spans residues 36–175; it reads ERPLGEVYMD…LASTSDKGSM (140 aa). Ser104 and Ser106 each carry phosphoserine; by CDK2. Residue Ser119 is modified to Phosphoserine. Residues 144–175 form a disordered region; sequence EAGPPAYYRPNSDNRRQGGRERLASTSDKGSM. Positions 155–166 are enriched in basic and acidic residues; it reads SDNRRQGGRERL. At Ser168 the chain carries Phosphoserine; by CK2. NR C4-type zinc fingers lie at residues 186–206 and 222–246; these read CAVCNDYASGYHYGVWSCEGC and CPATNQCTIDKNRRKSCQACRLRKC. The segment at residues 186 to 251 is a DNA-binding region (nuclear receptor); it reads CAVCNDYASG…RLRKCYEVGM (66 aa). A mediates interaction with DNTTIP2 region spans residues 186 to 311; the sequence is CAVCNDYASG…TKKNSPVLSL (126 aa). A hinge region spans residues 252 to 311; that stretch reads MKGGIRKDRRGGRMLKHKRQRDDGEGRNEAVPSGDMRAANLWPSPIMIKHTKKNSPVLSL. The segment covering 259 to 270 has biased composition (basic residues); sequence DRRGGRMLKHKR. The tract at residues 259–285 is disordered; it reads DRRGGRMLKHKRQRDDGEGRNEAVPSG. The residue at position 261 (Arg261) is an Asymmetric dimethylarginine; by PRMT1. The interval 263 to 596 is interaction with AKAP13; sequence GRMLKHKRQR…GEAENFPSTV (334 aa). The tract at residues 265 to 595 is self-association; that stretch reads MLKHKRQRDD…TGEAENFPST (331 aa). The 237-residue stretch at 312–548 folds into the NR LBD domain; that stretch reads TADQMISALL…DLLLEMLDAH (237 aa). Residues 312-595 are transactivation AF-2; sequence TADQMISALL…TGEAENFPST (284 aa). Positions 354 and 395 each coordinate 17beta-estradiol. Cys448 carries the S-palmitoyl cysteine lipid modification. Position 525 (His525) interacts with 17beta-estradiol. Tyr538 is modified (phosphotyrosine; by Tyr-kinases). Thr572 carries O-linked (GlcNAc) threonine glycosylation.

This sequence belongs to the nuclear hormone receptor family. NR3 subfamily. Binds DNA as a homodimer. Can form a heterodimer with ESR2. Interacts with coactivator NCOA5. Interacts with PELP1, the interaction is enhanced by 17-beta-estradiol; the interaction increases ESR1 transcriptional activity. Interacts with NCOA7; the interaction is ligand-inducible. Interacts with AKAP13, CUEDC2, HEXIM1, KDM5A, MAP1S, SMARD1, and UBE1C. Interacts with MUC1; the interaction is stimulated by 7 beta-estradiol (E2) and enhances ESR1-mediated transcription. Interacts with DNTTIP2, and UIMC1. Interacts with KMT2D/MLL2. Interacts with ATAD2; the interaction is enhanced by estradiol. Interacts with KIF18A and LDB1. Interacts with RLIM (via its C-terminus). Interacts with MACROD1. Interacts with SH2D4A and PLCG. Interacts with SH2D4A; the interaction blocks binding to PLCG and inhibits estrogen-induced cell proliferation. Interacts with DYNLL1. Interacts with CCDC62; the interaction requires estradiol and appears to enhance the transcription of target genes. Interacts with NR2C1; the interaction prevents homodimerization of ESR1 and suppresses its transcriptional activity and cell growth. Interacts with DNAAF4. Interacts with PRMT2. Interacts with RBFOX2. Interacts with EP300; the interaction is estrogen-dependent and enhanced by CITED1. Interacts with CITED1; the interaction is estrogen-dependent. Interacts with FAM120B, FOXL2, PHB2 and SLC30A9. Interacts with coactivators NCOA3 and NCOA6. Interacts with STK3/MST2 only in the presence of SAV1 and vice-versa. Binds to CSNK1D. Interacts with NCOA2; NCOA2 can interact with ESR1 AF-1 and AF-2 domains simultaneously and mediate their transcriptional synergy. Interacts with DDX5. Interacts with NCOA1; the interaction seems to require a self-association of N-terminal and C-terminal regions. Interacts with ZNF366, DDX17, NFKB1, RELA, SP1 and SP3. Interacts with NRIP1. Interacts with GPER1; the interaction occurs in an estrogen-dependent manner. Interacts with CLOCK and the interaction is stimulated by estrogen. Interacts with TRIP4 (ufmylated); estrogen dependent. Interacts with LMTK3; the interaction phosphorylates ESR1 (in vitro) and protects it against proteasomal degradation. Interacts with CCAR2 (via N-terminus) in a ligand-independent manner. Interacts with ZFHX3. Interacts with SFR1 in a ligand-dependent and -independent manner. Interacts with DCAF13, LATS1 and DCAF1; regulates ESR1 ubiquitination and ubiquitin-mediated proteasomal degradation. Interacts (via DNA-binding domain) with POU4F2 (C-terminus); this interaction increases the estrogen receptor ESR1 transcriptional activity in a DNA- and ligand 17-beta-estradiol-independent manner. Interacts with ESRRB isoform 1. Interacts with UBE3A and WBP2. Interacts with GTF2B. Interacts with RBM39. In the absence of hormonal ligand, interacts with TACC1. Interacts with PI3KR1 or PI3KR2 and PTK2/FAK1. Interacts with SRC. Interacts with BAG1; the interaction is promoted in the absence of estradiol (17-beta-estradiol/E2). Interacts with and ubiquitinated by STUB1; the interaction is promoted in the absence of estradiol (17-beta-estradiol/E2). Interacts with NEDD8. Glycosylated; contains N-acetylglucosamine, probably O-linked. Post-translationally, ubiquitinated; regulated by LATS1 via DCAF1 it leads to ESR1 proteasomal degradation. Deubiquitinated by OTUB1. Ubiquitinated by STUB1/CHIP; in the CA1 hippocampal region following loss of endogenous circulating estradiol (17-beta-estradiol/E2). Ubiquitinated by UBR5, leading to its degradation: UBR5 specifically recognizes and binds ligand-bound ESR1 when it is not associated with coactivators (NCOAs). In presence of NCOAs, the UBR5-degron is not accessible, preventing its ubiquitination and degradation. In terms of processing, phosphorylated by cyclin A/CDK2 and CK1. Phosphorylation probably enhances transcriptional activity. Dephosphorylation at Ser-119 by PPP5C inhibits its transactivation activity. Phosphorylated by LMTK3 (in vitro). Palmitoylated at Cys-448 by ZDHHC7 and ZDHHC21. Palmitoylation is required for plasma membrane targeting and for rapid intracellular signaling via ERK and AKT kinases and cAMP generation, but not for signaling mediated by the nuclear hormone receptor. Post-translationally, dimethylated by PRMT1 at Arg-261. The methylation may favor cytoplasmic localization. Demethylated by JMJD6 at Arg-261.

It localises to the nucleus. The protein resides in the cytoplasm. Its subcellular location is the golgi apparatus. It is found in the cell membrane. Functionally, nuclear hormone receptor. The steroid hormones and their receptors are involved in the regulation of eukaryotic gene expression and affect cellular proliferation and differentiation in target tissues. Ligand-dependent nuclear transactivation involves either direct homodimer binding to a palindromic estrogen response element (ERE) sequence or association with other DNA-binding transcription factors, such as AP-1/c-Jun, c-Fos, ATF-2, Sp1 and Sp3, to mediate ERE-independent signaling. Ligand binding induces a conformational change allowing subsequent or combinatorial association with multiprotein coactivator complexes through LXXLL motifs of their respective components. Mutual transrepression occurs between the estrogen receptor (ER) and NF-kappa-B in a cell-type specific manner. Decreases NF-kappa-B DNA-binding activity and inhibits NF-kappa-B-mediated transcription from the IL6 promoter and displace RELA/p65 and associated coregulators from the promoter. Recruited to the NF-kappa-B response element of the CCL2 and IL8 promoters and can displace CREBBP. Present with NF-kappa-B components RELA/p65 and NFKB1/p50 on ERE sequences. Can also act synergistically with NF-kappa-B to activate transcription involving respective recruitment adjacent response elements; the function involves CREBBP. Can activate the transcriptional activity of TFF1. Also mediates membrane-initiated estrogen signaling involving various kinase cascades. Essential for MTA1-mediated transcriptional regulation of BRCA1 and BCAS3. Maintains neuronal survival in response to ischemic reperfusion injury when in the presence of circulating estradiol (17-beta-estradiol/E2). The sequence is that of Estrogen receptor (ESR1) from Bos taurus (Bovine).